Here is a 112-residue protein sequence, read N- to C-terminus: MGYTIQLDKDGDYCWDEDPTHHDPYMQANTTSHTAVSRAAMAAPHVAAHHAFHEPFIKLNLTDKNIFNGLGFILIVIFIYLLLITLQQMLTRHIYNTVQHCVKAHLDSKNLQ.

Asparagine 29 and asparagine 60 each carry an N-linked (GlcNAc...) asparagine; by host glycan. Residues isoleucine 66–leucine 86 traverse the membrane as a helical segment.

This sequence belongs to the asfivirus B117L family.

It localises to the host membrane. The protein localises to the virion. This is an uncharacterized protein from Ornithodoros (relapsing fever ticks).